We begin with the raw amino-acid sequence, 685 residues long: Glycine--tRNA ligase beta subunit (685 aa).

The interval 58-77 is disordered; sequence GLTAQSPTTREERKGPRTDA. Residues 66–77 show a composition bias toward basic and acidic residues; it reads TREERKGPRTDA.

This sequence belongs to the class-II aminoacyl-tRNA synthetase family. In terms of assembly, tetramer of two alpha and two beta subunits.

The protein localises to the cytoplasm. The enzyme catalyses tRNA(Gly) + glycine + ATP = glycyl-tRNA(Gly) + AMP + diphosphate. The sequence is that of Glycine--tRNA ligase beta subunit from Paracoccus denitrificans (strain Pd 1222).